A 342-amino-acid chain; its full sequence is Cyclin-dependent kinase-like 4 (342 aa).

A Protein kinase domain is found at 4-286 (YEKLAKIGEG…CAQLLDSAYF (283 aa)). Residues 10 to 18 (IGEGSYGVV) and lysine 33 contribute to the ATP site. Residues 45 to 51 (RKIALRE) carry the [NKR]KIAxRE motif. Aspartate 126 acts as the Proton acceptor in catalysis. The disordered stretch occupies residues 295 to 328 (KRKARSEGRSRRRQQNQLLPLIPGSHISPTPDGR).

The protein belongs to the protein kinase superfamily. CMGC Ser/Thr protein kinase family. CDC2/CDKX subfamily.

It localises to the cytoplasm. The catalysed reaction is L-seryl-[protein] + ATP = O-phospho-L-seryl-[protein] + ADP + H(+). The enzyme catalyses L-threonyl-[protein] + ATP = O-phospho-L-threonyl-[protein] + ADP + H(+). This is Cyclin-dependent kinase-like 4 (Cdkl4) from Mus musculus (Mouse).